Here is a 354-residue protein sequence, read N- to C-terminus: DNA repair protein rhp57 (354 aa).

100-107 (GESGSGKS) provides a ligand contact to ATP.

This sequence belongs to the RecA family.

Its subcellular location is the nucleus. Functionally, involved in recombination DNA repair and in the repair of gamma-ray-induced damage. In Schizosaccharomyces pombe (strain 972 / ATCC 24843) (Fission yeast), this protein is DNA repair protein rhp57 (rhp57).